The chain runs to 285 residues: 2-dehydro-3-deoxyphosphooctonate aldolase (285 aa).

The protein belongs to the KdsA family.

It localises to the cytoplasm. The catalysed reaction is D-arabinose 5-phosphate + phosphoenolpyruvate + H2O = 3-deoxy-alpha-D-manno-2-octulosonate-8-phosphate + phosphate. The protein operates within carbohydrate biosynthesis; 3-deoxy-D-manno-octulosonate biosynthesis; 3-deoxy-D-manno-octulosonate from D-ribulose 5-phosphate: step 2/3. It participates in bacterial outer membrane biogenesis; lipopolysaccharide biosynthesis. The chain is 2-dehydro-3-deoxyphosphooctonate aldolase from Polaromonas naphthalenivorans (strain CJ2).